The sequence spans 104 residues: Nucleoid-associated protein PEPE_1483 (104 aa).

Residues methionine 1–threonine 35 form a disordered region. Residues methionine 8–lysine 17 show a composition bias toward low complexity. Residues lysine 21–asparagine 30 show a composition bias toward basic and acidic residues.

Belongs to the YbaB/EbfC family. As to quaternary structure, homodimer.

The protein localises to the cytoplasm. The protein resides in the nucleoid. In terms of biological role, binds to DNA and alters its conformation. May be involved in regulation of gene expression, nucleoid organization and DNA protection. The chain is Nucleoid-associated protein PEPE_1483 from Pediococcus pentosaceus (strain ATCC 25745 / CCUG 21536 / LMG 10740 / 183-1w).